Consider the following 513-residue polypeptide: Sugar transport protein 7 (513 aa).

Residues 1–26 (MAGGSFGPTGVAKERAEQYQGKVTSY) lie on the Cytoplasmic side of the membrane. The next 12 helical transmembrane spans lie at 27-47 (VIIACLVAAIGGSIFGYDIGI), 84-104 (GLAAFTSSLYLAGLVSTLVAS), 121-141 (ISFLIGSGLNAGAVNLAMLLA), 144-164 (IMLGVGIGFGNQAVPLYLSEV), 171-191 (GGLNMMFQLATTIGIFTANMV), 205-225 (LSLGLAAFPALLMTLGGYFLP), 286-306 (LVMAICMPMFQILTGINSILF), 324-344 (YSSALTGAVLVLSTFISIGLV), 351-371 (ALLITGGIQMIICQVIVAVIL), 387-407 (VIVVIFICLFVVAFGWSWGPL), 427-447 (ITVAVNLLFTFIIAQAFLGLL), and 452-472 (FGIFLFFAGWVTVMTIFVYFL). Residues 473 to 513 (LPETKGVPIEEMTLLWSKHWFWKKVLPDATNLEDESKNVSV) lie on the Cytoplasmic side of the membrane.

Belongs to the major facilitator superfamily. Sugar transporter (TC 2.A.1.1) family.

It is found in the cell membrane. In terms of biological role, mediates an active uptake of hexoses, probably by sugar/hydrogen symport. The sequence is that of Sugar transport protein 7 (STP7) from Arabidopsis thaliana (Mouse-ear cress).